We begin with the raw amino-acid sequence, 274 residues long: Penicillin-insensitive murein endopeptidase (274 aa).

The first 19 residues, 1–19 (MNKTAIALLALLASSASLA), serve as a signal peptide directing secretion. Intrachain disulfides connect cysteine 44–cysteine 265, cysteine 187–cysteine 235, and cysteine 216–cysteine 223. Zn(2+)-binding residues include histidine 110, histidine 113, aspartate 120, aspartate 147, histidine 150, and histidine 211. The tract at residues 228-265 (LPPPGDGCGAELQSWFAPPKPGTTKPEKKTPPPLPPSC) is disordered.

Belongs to the peptidase M74 family. As to quaternary structure, dimer. Requires Zn(2+) as cofactor.

The protein localises to the periplasm. In terms of biological role, murein endopeptidase that cleaves the D-alanyl-meso-2,6-diamino-pimelyl amide bond that connects peptidoglycan strands. Likely plays a role in the removal of murein from the sacculus. The chain is Penicillin-insensitive murein endopeptidase from Shigella boydii serotype 18 (strain CDC 3083-94 / BS512).